A 51-amino-acid polypeptide reads, in one-letter code: Large ribosomal subunit protein eL39 (51 aa).

The disordered stretch occupies residues lysine 32–alanine 51.

It belongs to the eukaryotic ribosomal protein eL39 family.

The sequence is that of Large ribosomal subunit protein eL39 from Pyrobaculum calidifontis (strain DSM 21063 / JCM 11548 / VA1).